Consider the following 625-residue polypeptide: Chaperone protein DnaK (625 aa).

Thr-197 carries the phosphothreonine; by autocatalysis modification. The disordered stretch occupies residues 598–625 (AYAKEQGGTQQGTDTKKKDDDVIDAEVE).

This sequence belongs to the heat shock protein 70 family.

In terms of biological role, acts as a chaperone. In Helicobacter hepaticus (strain ATCC 51449 / 3B1), this protein is Chaperone protein DnaK.